The following is a 178-amino-acid chain: Female-specific protein transformer (178 aa).

Composition is skewed to basic and acidic residues over residues 1–18 (MKMDADSSCGADHRDSHG) and 25–40 (REREQHGRTSNRDSKK). The segment at 1-117 (MKMDADSSCG…RRYNPPPKII (117 aa)) is disordered. Basic residues-rich tracts occupy residues 59–73 (RRLRKRSPRSTRRSA) and 81–108 (RRHRHRSRSRNRSRSRSSERRRRQRSPR).

The protein resides in the nucleus speckle. Member of the regulatory pathway controlling female somatic sexual differentiation, regulated by Sxl. Activates dsx female-specific splicing by promoting the formation of a splicing enhancer complex which consists of tra, tra2 and sr proteins. The protein is Female-specific protein transformer (tra) of Drosophila erecta (Fruit fly).